Consider the following 160-residue polypeptide: GPI-anchored protein LLG3 (160 aa).

The N-terminal stretch at 1-23 is a signal peptide; the sequence is MKITHHCLVSLLSILLLSGFAFS. The N-linked (GlcNAc...) asparagine glycan is linked to N56. The GPI-anchor amidated serine moiety is linked to residue S137. Positions 138–160 are cleaved as a propeptide — removed in mature form; it reads HASIPLVSTHVLLITVSILFHLF.

In terms of tissue distribution, expressed in pollen, pollen tubes, sporophytic pistil tissues, in the early stages of female gametophyte development, and in unfertilized, mature ovules.

It localises to the cell membrane. In Arabidopsis thaliana (Mouse-ear cress), this protein is GPI-anchored protein LLG3.